A 547-amino-acid chain; its full sequence is Chaperonin GroEL (547 aa).

Residues 30 to 33, lysine 51, 87 to 91, glycine 415, 479 to 481, and aspartate 495 contribute to the ATP site; these read TLGP, DGTTT, and NAA.

Belongs to the chaperonin (HSP60) family. In terms of assembly, forms a cylinder of 14 subunits composed of two heptameric rings stacked back-to-back. Interacts with the co-chaperonin GroES.

Its subcellular location is the cytoplasm. The enzyme catalyses ATP + H2O + a folded polypeptide = ADP + phosphate + an unfolded polypeptide.. Together with its co-chaperonin GroES, plays an essential role in assisting protein folding. The GroEL-GroES system forms a nano-cage that allows encapsulation of the non-native substrate proteins and provides a physical environment optimized to promote and accelerate protein folding. This Cupriavidus taiwanensis (strain DSM 17343 / BCRC 17206 / CCUG 44338 / CIP 107171 / LMG 19424 / R1) (Ralstonia taiwanensis (strain LMG 19424)) protein is Chaperonin GroEL.